Reading from the N-terminus, the 331-residue chain is Pantothenate kinase (331 aa).

Residue 109 to 116 (GSVAVGKS) participates in ATP binding.

This sequence belongs to the prokaryotic pantothenate kinase family.

The protein resides in the cytoplasm. The enzyme catalyses (R)-pantothenate + ATP = (R)-4'-phosphopantothenate + ADP + H(+). It functions in the pathway cofactor biosynthesis; coenzyme A biosynthesis; CoA from (R)-pantothenate: step 1/5. The polypeptide is Pantothenate kinase (Rhizobium meliloti (strain 1021) (Ensifer meliloti)).